The primary structure comprises 510 residues: ATP synthase subunit alpha, mitochondrial (510 aa).

ATP is bound at residue 171–178 (GDRQTGKT).

It belongs to the ATPase alpha/beta chains family. As to quaternary structure, F-type ATPases have 2 components, CF(1) - the catalytic core - and CF(0) - the membrane proton channel. CF(1) has five subunits: alpha(3), beta(3), gamma(1), delta(1), epsilon(1). CF(0) has three main subunits: a, b and c.

The protein localises to the mitochondrion. The protein resides in the mitochondrion inner membrane. Functionally, mitochondrial membrane ATP synthase (F(1)F(0) ATP synthase or Complex V) produces ATP from ADP in the presence of a proton gradient across the membrane which is generated by electron transport complexes of the respiratory chain. F-type ATPases consist of two structural domains, F(1) - containing the extramembraneous catalytic core, and F(0) - containing the membrane proton channel, linked together by a central stalk and a peripheral stalk. During catalysis, ATP synthesis in the catalytic domain of F(1) is coupled via a rotary mechanism of the central stalk subunits to proton translocation. Subunits alpha and beta form the catalytic core in F(1). Rotation of the central stalk against the surrounding alpha(3)beta(3) subunits leads to hydrolysis of ATP in three separate catalytic sites on the beta subunits. Subunit alpha does not bear the catalytic high-affinity ATP-binding sites. In Helianthus annuus (Common sunflower), this protein is ATP synthase subunit alpha, mitochondrial (ATPA).